The sequence spans 175 residues: Catabolic 3-dehydroquinase (175 aa).

Residue Tyr23 is the Proton acceptor of the active site. 3 residues coordinate substrate: Asn74, His80, and Asp87. His100 (proton donor) is an active-site residue. Residues 101-102 (IS) and Arg111 contribute to the substrate site.

The protein belongs to the type-II 3-dehydroquinase family. Homododecamer. Adopts a ring-like structure, composed of an arrangement of two hexameric rings stacked on top of one another.

It carries out the reaction 3-dehydroquinate = 3-dehydroshikimate + H2O. It participates in aromatic compound metabolism; 3,4-dihydroxybenzoate biosynthesis; 3,4-dihydroxybenzoate from 3-dehydroquinate: step 1/2. Is involved in the catabolism of quinate. Allows the utilization of quinate as carbon source via the beta-ketoadipate pathway. This chain is Catabolic 3-dehydroquinase, found in Talaromyces marneffei (strain ATCC 18224 / CBS 334.59 / QM 7333) (Penicillium marneffei).